We begin with the raw amino-acid sequence, 356 residues long: Ferrochelatase (356 aa).

The Fe cation site is built by His214 and Glu295.

Belongs to the ferrochelatase family.

The protein localises to the cytoplasm. It catalyses the reaction heme b + 2 H(+) = protoporphyrin IX + Fe(2+). The protein operates within porphyrin-containing compound metabolism; protoheme biosynthesis; protoheme from protoporphyrin-IX: step 1/1. Functionally, catalyzes the ferrous insertion into protoporphyrin IX. This is Ferrochelatase from Paraburkholderia xenovorans (strain LB400).